Reading from the N-terminus, the 120-residue chain is Large ribosomal subunit protein uL18 (120 aa).

This sequence belongs to the universal ribosomal protein uL18 family. In terms of assembly, part of the 50S ribosomal subunit; part of the 5S rRNA/L5/L18/L25 subcomplex. Contacts the 5S and 23S rRNAs.

Its function is as follows. This is one of the proteins that bind and probably mediate the attachment of the 5S RNA into the large ribosomal subunit, where it forms part of the central protuberance. This chain is Large ribosomal subunit protein uL18, found in Acidiphilium cryptum (strain JF-5).